Reading from the N-terminus, the 721-residue chain is ATP-dependent zinc metalloprotease FtsH (721 aa).

Topologically, residues 1–44 (MYFLKKIVNLFSSKIESEDNNVKKDDLTQPRKQSPEARKRRNRR) are cytoplasmic. The chain crosses the membrane as a helical span at residues 45 to 65 (IIFWLIILLIIGTIIGVIIYF). Over 66 to 190 (SVRKEYDNVI…AGIPSSGFNP (125 aa)) the chain is Extracellular. Residues 191–211 (QVIISPLISIIFFIIFLYIIL) traverse the membrane as a helical segment. Topologically, residues 212-721 (RVSKAQSDSL…KDKEKDQKSN (510 aa)) are cytoplasmic. Residue 279–286 (GPPGTGKT) participates in ATP binding. His498 is a Zn(2+) binding site. Residue Glu499 is part of the active site. Zn(2+) contacts are provided by His502 and Asp577. Positions 686–721 (NKREASQKQANSSVEEAKVVDDEESIKDKEKDQKSN) are disordered. The segment covering 700–721 (EEAKVVDDEESIKDKEKDQKSN) has biased composition (basic and acidic residues).

In the central section; belongs to the AAA ATPase family. The protein in the C-terminal section; belongs to the peptidase M41 family. As to quaternary structure, homohexamer. Requires Zn(2+) as cofactor.

Its subcellular location is the cell membrane. Functionally, acts as a processive, ATP-dependent zinc metallopeptidase for both cytoplasmic and membrane proteins. Plays a role in the quality control of integral membrane proteins. In Ureaplasma parvum serovar 3 (strain ATCC 27815 / 27 / NCTC 11736), this protein is ATP-dependent zinc metalloprotease FtsH.